The primary structure comprises 147 residues: UPF0208 membrane protein PM0703 (147 aa).

The next 2 membrane-spanning stretches (helical) occupy residues 32-52 (VIKATLFAQKFMPFLAVFAIT) and 65-85 (LAIAVFSAIVALLIPLQGLYW).

It belongs to the UPF0208 family.

The protein localises to the cell inner membrane. The polypeptide is UPF0208 membrane protein PM0703 (Pasteurella multocida (strain Pm70)).